We begin with the raw amino-acid sequence, 224 residues long: UPF0758 protein CV_3079 (224 aa).

One can recognise an MPN domain in the interval Ala102 to Leu224. Residues His173, His175, and Asp186 each coordinate Zn(2+). The short motif at His173 to Asp186 is the JAMM motif element.

Belongs to the UPF0758 family.

In Chromobacterium violaceum (strain ATCC 12472 / DSM 30191 / JCM 1249 / CCUG 213 / NBRC 12614 / NCIMB 9131 / NCTC 9757 / MK), this protein is UPF0758 protein CV_3079.